The following is a 1457-amino-acid chain: ABC transporter G family member 36 (1457 aa).

A disordered region spans residues 14 to 43; the sequence is RLGGSMRGDSGSMWRRGDDVFSRSSREEDD. Over residues 28–39 the composition is skewed to basic and acidic residues; it reads RRGDDVFSRSSR. One can recognise an ABC transporter 1 domain in the interval 164–437; it reads GNALGILPNR…FESTGFKCPD (274 aa). 197–204 contributes to the ATP binding site; it reads GPPGSGKT. Residues 515–728 form the ABC transmembrane type-2 1 domain; that stretch reads ELLKANIDRE…AQNAISVNEL (214 aa). 7 helical membrane passes run 533 to 553, 565 to 585, 621 to 641, 653 to 673, 677 to 697, 706 to 726, and 765 to 785; these read FVYM…MTLF, SGGI…FNGF, IPIT…VIGF, LLML…GGAA, IVAN…GGFI, WWIW…ISVN, and IGFG…TLAL. Residues 821–841 form a disordered region; sequence SSGSTRRPMGNGTENDSTIVD. The ABC transporter 2 domain occupies 860 to 1112; it reads LSFDNVRYSV…ELIKYFESIP (253 aa). ATP is bound at residue 905-912; it reads GVSGAGKT. Residues 1185–1399 form the ABC transmembrane type-2 2 domain; the sequence is TQCMACLWKQ…TLYGLVVSQF (215 aa). The next 7 membrane-spanning stretches (helical) occupy residues 1209–1229, 1244–1264, 1292–1312, 1319–1339, 1349–1369, 1380–1400, and 1429–1449; these read FFFT…LGGK, YAAV…VVAV, IPYT…MIGF, FFWY…YGMM, IASI…GFVI, WYCW…SQFG, and WVAT…GFAI.

This sequence belongs to the ABC transporter superfamily. ABCG family. PDR (TC 3.A.1.205) subfamily.

It is found in the membrane. In terms of biological role, may be a general defense protein. This Oryza sativa subsp. indica (Rice) protein is ABC transporter G family member 36.